We begin with the raw amino-acid sequence, 343 residues long: L-threonine 3-dehydrogenase (343 aa).

Cys-38 is a binding site for Zn(2+). Catalysis depends on charge relay system residues Thr-40 and His-43. Zn(2+)-binding residues include His-63, Glu-64, Cys-93, Cys-96, Cys-99, and Cys-107. NAD(+) contacts are provided by residues Ile-175, Asp-195, Arg-200, 262 to 264 (LGI), and 286 to 287 (IY).

It belongs to the zinc-containing alcohol dehydrogenase family. Homotetramer. The cofactor is Zn(2+).

The protein localises to the cytoplasm. It catalyses the reaction L-threonine + NAD(+) = (2S)-2-amino-3-oxobutanoate + NADH + H(+). The protein operates within amino-acid degradation; L-threonine degradation via oxydo-reductase pathway; glycine from L-threonine: step 1/2. In terms of biological role, catalyzes the NAD(+)-dependent oxidation of L-threonine to 2-amino-3-ketobutyrate. The polypeptide is L-threonine 3-dehydrogenase (Pectobacterium carotovorum subsp. carotovorum (strain PC1)).